The chain runs to 186 residues: Interferon beta-2 (186 aa).

The first 21 residues, 1-21, serve as a signal peptide directing secretion; sequence MTHRCLLQMVLLLCFSTTALS. Cys52 and Cys161 are oxidised to a cystine. 2 N-linked (GlcNAc...) asparagine glycosylation sites follow: Asn131 and Asn173.

Belongs to the alpha/beta interferon family. Monomer.

It is found in the secreted. Its function is as follows. Has antiviral, antibacterial and anticancer activities. The chain is Interferon beta-2 (IFNB2) from Bos taurus (Bovine).